A 239-amino-acid polypeptide reads, in one-letter code: C-8 sterol isomerase erg2 (239 aa).

The N-linked (GlcNAc...) asparagine glycan is linked to Asn-11. Residues 27–47 (KFGFLAVFVAIFAALYSYLDA) form a helical membrane-spanning segment. N-linked (GlcNAc...) asparagine glycosylation is present at Asn-73.

Belongs to the ERG2 family.

It is found in the endoplasmic reticulum membrane. The catalysed reaction is fecosterol = episterol. Its pathway is steroid metabolism; ergosterol biosynthesis. Functionally, C-8 sterol isomerase; part of the third module of ergosterol biosynthesis pathway that includes the late steps of the pathway. Erg2 catalyzes the reaction which results in unsaturation at C-7 in the B ring of sterols and thus converts fecosterol to episterol. The third module or late pathway involves the ergosterol synthesis itself through consecutive reactions that mainly occur in the endoplasmic reticulum (ER) membrane. Firstly, the squalene synthase erg9 catalyzes the condensation of 2 farnesyl pyrophosphate moieties to form squalene, which is the precursor of all steroids. Squalene synthase is crucial for balancing the incorporation of farnesyl diphosphate (FPP) into sterol and nonsterol isoprene synthesis. Secondly, squalene is converted into lanosterol by the consecutive action of the squalene epoxidase erg1 and the lanosterol synthase erg7. Then, the delta(24)-sterol C-methyltransferase erg6 methylates lanosterol at C-24 to produce eburicol. Eburicol is the substrate of the sterol 14-alpha demethylase encoded by cyp51A and cyp51B, to yield 4,4,24-trimethyl ergosta-8,14,24(28)-trienol. The C-14 reductase erg24 then reduces the C14=C15 double bond which leads to 4,4-dimethylfecosterol. A sequence of further demethylations at C-4, involving the C-4 demethylation complex containing the C-4 methylsterol oxidases erg25A or erg25B, the sterol-4-alpha-carboxylate 3-dehydrogenase erg26 and the 3-keto-steroid reductase erg27, leads to the production of fecosterol via 4-methylfecosterol. The C-8 sterol isomerase erg2 then catalyzes the reaction which results in unsaturation at C-7 in the B ring of sterols and thus converts fecosterol to episterol. The sterol-C5-desaturase erg3B then catalyzes the introduction of a C-5 double bond in the B ring to produce 5-dehydroepisterol. The 2 other sterol-C5-desaturases, erg3A and erg3C, seem to be less important in ergosterol biosynthesis. The C-22 sterol desaturase erg5 further converts 5-dehydroepisterol into ergosta-5,7,22,24(28)-tetraen-3beta-ol by forming the C-22(23) double bond in the sterol side chain. Finally, ergosta-5,7,22,24(28)-tetraen-3beta-ol is substrate of the C-24(28) sterol reductases erg4A and erg4B to produce ergosterol. Possible alternative sterol biosynthetic pathways might exist from fecosterol to ergosterol, depending on the activities of the erg3 isoforms. The chain is C-8 sterol isomerase erg2 from Aspergillus fumigatus (strain ATCC MYA-4609 / CBS 101355 / FGSC A1100 / Af293) (Neosartorya fumigata).